The following is a 192-amino-acid chain: Segregation and condensation protein B (192 aa).

Belongs to the ScpB family. As to quaternary structure, homodimer. Homodimerization may be required to stabilize the binding of ScpA to the Smc head domains. Component of a cohesin-like complex composed of ScpA, ScpB and the Smc homodimer, in which ScpA and ScpB bind to the head domain of Smc. The presence of the three proteins is required for the association of the complex with DNA.

It localises to the cytoplasm. Functionally, participates in chromosomal partition during cell division. May act via the formation of a condensin-like complex containing Smc and ScpA that pull DNA away from mid-cell into both cell halves. The chain is Segregation and condensation protein B from Oceanobacillus iheyensis (strain DSM 14371 / CIP 107618 / JCM 11309 / KCTC 3954 / HTE831).